A 293-amino-acid chain; its full sequence is Neugrin (293 aa).

The N-terminal stretch at M1–A18 is a signal peptide. A Phosphoserine modification is found at S41. 2 disordered regions span residues D177–D210 and T224–S254. A glycan (N-linked (GlcNAc...) asparagine) is linked at N185. Over residues H198 to D210 the composition is skewed to basic and acidic residues.

The protein belongs to the neugrin family. Forms a regulatory protein-RNA complex, consisting of RCC1L, NGRN, RPUSD3, RPUSD4, TRUB2, FASTKD2 and 16S mt-rRNA. Interacts with 16S mt-rRNA; this interaction is direct. As to expression, expressed in heart, brain, liver and kidney. In brain, mainly expressed in neurons rather than glial cells.

The protein resides in the nucleus. It localises to the secreted. Its subcellular location is the mitochondrion membrane. Functionally, plays an essential role in mitochondrial ribosome biogenesis. As a component of a functional protein-RNA module, consisting of RCC1L, NGRN, RPUSD3, RPUSD4, TRUB2, FASTKD2 and 16S mitochondrial ribosomal RNA (16S mt-rRNA), controls 16S mt-rRNA abundance and is required for intra-mitochondrial translation of core subunits of the oxidative phosphorylation system. This chain is Neugrin (Ngrn), found in Mus musculus (Mouse).